A 490-amino-acid chain; its full sequence is Aspartyl/glutamyl-tRNA(Asn/Gln) amidotransferase subunit B (490 aa).

The protein belongs to the GatB/GatE family. GatB subfamily. As to quaternary structure, heterotrimer of A, B and C subunits.

The catalysed reaction is L-glutamyl-tRNA(Gln) + L-glutamine + ATP + H2O = L-glutaminyl-tRNA(Gln) + L-glutamate + ADP + phosphate + H(+). It carries out the reaction L-aspartyl-tRNA(Asn) + L-glutamine + ATP + H2O = L-asparaginyl-tRNA(Asn) + L-glutamate + ADP + phosphate + 2 H(+). In terms of biological role, allows the formation of correctly charged Asn-tRNA(Asn) or Gln-tRNA(Gln) through the transamidation of misacylated Asp-tRNA(Asn) or Glu-tRNA(Gln) in organisms which lack either or both of asparaginyl-tRNA or glutaminyl-tRNA synthetases. The reaction takes place in the presence of glutamine and ATP through an activated phospho-Asp-tRNA(Asn) or phospho-Glu-tRNA(Gln). The polypeptide is Aspartyl/glutamyl-tRNA(Asn/Gln) amidotransferase subunit B (Methylobacterium radiotolerans (strain ATCC 27329 / DSM 1819 / JCM 2831 / NBRC 15690 / NCIMB 10815 / 0-1)).